The sequence spans 305 residues: Tyrosine recombinase XerD (305 aa).

In terms of domain architecture, Core-binding (CB) spans 1–83; sequence MEFISQFLEM…TIKSYYEFLI (83 aa). The region spanning 104–298 is the Tyr recombinase domain; it reads KLPEILSIDD…QTNHLKKALL (195 aa). Residues R145, K175, H250, R253, and H276 contribute to the active site. Residue Y285 is the O-(3'-phospho-DNA)-tyrosine intermediate of the active site.

The protein belongs to the 'phage' integrase family. XerD subfamily. As to quaternary structure, forms a cyclic heterotetrameric complex composed of two molecules of XerC and two molecules of XerD.

It localises to the cytoplasm. In terms of biological role, site-specific tyrosine recombinase, which acts by catalyzing the cutting and rejoining of the recombining DNA molecules. The XerC-XerD complex is essential to convert dimers of the bacterial chromosome into monomers to permit their segregation at cell division. It also contributes to the segregational stability of plasmids. The protein is Tyrosine recombinase XerD of Rickettsia bellii (strain RML369-C).